Consider the following 637-residue polypeptide: Threonine--tRNA ligase (637 aa).

In terms of domain architecture, TGS spans 1–65 (MIAIQLPDGS…EADEALSIIT (65 aa)). Positions 246–537 (DHRKLGRELD…LIEEHAGALP (292 aa)) are catalytic. Zn(2+)-binding residues include C337, H388, and H514.

The protein belongs to the class-II aminoacyl-tRNA synthetase family. As to quaternary structure, homodimer. It depends on Zn(2+) as a cofactor.

The protein localises to the cytoplasm. It carries out the reaction tRNA(Thr) + L-threonine + ATP = L-threonyl-tRNA(Thr) + AMP + diphosphate + H(+). Catalyzes the attachment of threonine to tRNA(Thr) in a two-step reaction: L-threonine is first activated by ATP to form Thr-AMP and then transferred to the acceptor end of tRNA(Thr). Also edits incorrectly charged L-seryl-tRNA(Thr). This Leptothrix cholodnii (strain ATCC 51168 / LMG 8142 / SP-6) (Leptothrix discophora (strain SP-6)) protein is Threonine--tRNA ligase.